Consider the following 360-residue polypeptide: Phosphoserine aminotransferase (360 aa).

Arginine 41 contacts L-glutamate. 4 residues coordinate pyridoxal 5'-phosphate: tryptophan 101, threonine 152, aspartate 172, and glutamine 195. Position 196 is an N6-(pyridoxal phosphate)lysine (lysine 196). A pyridoxal 5'-phosphate-binding site is contributed by 237 to 238 (NT).

Belongs to the class-V pyridoxal-phosphate-dependent aminotransferase family. SerC subfamily. As to quaternary structure, homodimer. It depends on pyridoxal 5'-phosphate as a cofactor.

Its subcellular location is the cytoplasm. The catalysed reaction is O-phospho-L-serine + 2-oxoglutarate = 3-phosphooxypyruvate + L-glutamate. The enzyme catalyses 4-(phosphooxy)-L-threonine + 2-oxoglutarate = (R)-3-hydroxy-2-oxo-4-phosphooxybutanoate + L-glutamate. The protein operates within amino-acid biosynthesis; L-serine biosynthesis; L-serine from 3-phospho-D-glycerate: step 2/3. Its pathway is cofactor biosynthesis; pyridoxine 5'-phosphate biosynthesis; pyridoxine 5'-phosphate from D-erythrose 4-phosphate: step 3/5. Its function is as follows. Catalyzes the reversible conversion of 3-phosphohydroxypyruvate to phosphoserine and of 3-hydroxy-2-oxo-4-phosphonooxybutanoate to phosphohydroxythreonine. The protein is Phosphoserine aminotransferase of Paraburkholderia phytofirmans (strain DSM 17436 / LMG 22146 / PsJN) (Burkholderia phytofirmans).